Here is a 276-residue protein sequence, read N- to C-terminus: Diaminopimelate epimerase (276 aa).

The substrate site is built by Asn-13, Gln-46, and Asn-66. Cys-75 serves as the catalytic Proton donor. Residues 76-77, Asn-159, Asn-192, and 210-211 contribute to the substrate site; these read GN and ER. Cys-219 (proton acceptor) is an active-site residue. 220–221 is a binding site for substrate; it reads GS.

This sequence belongs to the diaminopimelate epimerase family. Homodimer.

The protein localises to the cytoplasm. It carries out the reaction (2S,6S)-2,6-diaminopimelate = meso-2,6-diaminopimelate. It functions in the pathway amino-acid biosynthesis; L-lysine biosynthesis via DAP pathway; DL-2,6-diaminopimelate from LL-2,6-diaminopimelate: step 1/1. Catalyzes the stereoinversion of LL-2,6-diaminopimelate (L,L-DAP) to meso-diaminopimelate (meso-DAP), a precursor of L-lysine and an essential component of the bacterial peptidoglycan. This chain is Diaminopimelate epimerase, found in Vibrio atlanticus (strain LGP32) (Vibrio splendidus (strain Mel32)).